Reading from the N-terminus, the 109-residue chain is Mitochondrial pyruvate carrier 2 (109 aa).

3 helical membrane-spanning segments follow: residues 19–35 (IHFW…IANI), 51–67 (IAVT…STII), and 74–90 (LFSV…YQLT).

This sequence belongs to the mitochondrial pyruvate carrier (MPC) (TC 2.A.105) family.

It is found in the mitochondrion inner membrane. Its function is as follows. Mediates the uptake of pyruvate into mitochondria. The chain is Mitochondrial pyruvate carrier 2 from Arabidopsis thaliana (Mouse-ear cress).